A 524-amino-acid polypeptide reads, in one-letter code: DNA damage-binding protein CMR1 (524 aa).

Residues 35-79 (EKIIPKPAPPKPKRASAPRAKREPVKRETARPTRQSSRLAGLDAD) are disordered. The span at 54–65 (AKREPVKRETAR) shows a compositional bias: basic and acidic residues. WD repeat units follow at residues 184-225 (LVPQ…VKAE), 245-285 (THSR…STEA), 295-332 (LPIS…STAE), 336-376 (LTDQ…GKGD), 385-425 (THDS…KWTA), 447-490 (GRWV…LAQL), and 493-524 (DGIT…CLWM).

The protein belongs to the WD repeat DDB2/WDR76 family.

DNA-binding protein that binds to both single- and double-stranded DNA. Binds preferentially to UV-damaged DNA. May be involved in DNA-metabolic processes. In Chaetomium globosum (strain ATCC 6205 / CBS 148.51 / DSM 1962 / NBRC 6347 / NRRL 1970) (Soil fungus), this protein is DNA damage-binding protein CMR1.